A 475-amino-acid chain; its full sequence is Ribulose bisphosphate carboxylase large chain (475 aa).

Positions 1–2 (MS) are excised as a propeptide. Pro3 is subject to N-acetylproline. Residue Lys14 is modified to N6,N6,N6-trimethyllysine. Substrate contacts are provided by Asn123 and Thr173. Lys175 serves as the catalytic Proton acceptor. Lys177 is a binding site for substrate. Mg(2+)-binding residues include Lys201, Asp203, and Glu204. Lys201 is modified (N6-carboxylysine). His294 acts as the Proton acceptor in catalysis. Residues Arg295, His327, and Ser379 each contribute to the substrate site.

Belongs to the RuBisCO large chain family. Type I subfamily. As to quaternary structure, heterohexadecamer of 8 large chains and 8 small chains; disulfide-linked. The disulfide link is formed within the large subunit homodimers. Requires Mg(2+) as cofactor. In terms of processing, the disulfide bond which can form in the large chain dimeric partners within the hexadecamer appears to be associated with oxidative stress and protein turnover.

The protein localises to the plastid. It is found in the chloroplast. The enzyme catalyses 2 (2R)-3-phosphoglycerate + 2 H(+) = D-ribulose 1,5-bisphosphate + CO2 + H2O. It catalyses the reaction D-ribulose 1,5-bisphosphate + O2 = 2-phosphoglycolate + (2R)-3-phosphoglycerate + 2 H(+). RuBisCO catalyzes two reactions: the carboxylation of D-ribulose 1,5-bisphosphate, the primary event in carbon dioxide fixation, as well as the oxidative fragmentation of the pentose substrate in the photorespiration process. Both reactions occur simultaneously and in competition at the same active site. The polypeptide is Ribulose bisphosphate carboxylase large chain (Corylus cornuta (Beaked hazel)).